Consider the following 369-residue polypeptide: DNA replication and repair protein RecF (369 aa).

30–37 (GQNAQGKT) contributes to the ATP binding site.

The protein belongs to the RecF family.

The protein localises to the cytoplasm. Its function is as follows. The RecF protein is involved in DNA metabolism; it is required for DNA replication and normal SOS inducibility. RecF binds preferentially to single-stranded, linear DNA. It also seems to bind ATP. This is DNA replication and repair protein RecF from Acetivibrio thermocellus (strain ATCC 27405 / DSM 1237 / JCM 9322 / NBRC 103400 / NCIMB 10682 / NRRL B-4536 / VPI 7372) (Clostridium thermocellum).